The chain runs to 320 residues: Methionyl-tRNA formyltransferase (320 aa).

114-117 (SLLP) is a binding site for (6S)-5,6,7,8-tetrahydrofolate.

The protein belongs to the Fmt family.

It carries out the reaction L-methionyl-tRNA(fMet) + (6R)-10-formyltetrahydrofolate = N-formyl-L-methionyl-tRNA(fMet) + (6S)-5,6,7,8-tetrahydrofolate + H(+). In terms of biological role, attaches a formyl group to the free amino group of methionyl-tRNA(fMet). The formyl group appears to play a dual role in the initiator identity of N-formylmethionyl-tRNA by promoting its recognition by IF2 and preventing the misappropriation of this tRNA by the elongation apparatus. The polypeptide is Methionyl-tRNA formyltransferase (Acinetobacter baumannii (strain AB0057)).